Here is a 360-residue protein sequence, read N- to C-terminus: MTTTLQQRESASLWEQFCQWVTSTNNRIYVGWFGTLMIPTLLTATTCFIIAFIAAPPVDIDGIREPVAGSLLYGNNIISGAVVPSSNAIGLHFYPIWEAASLDEWLYNGGPYQLVVFQFLIGIFCYMGRQWELSYRLGMRPWICVAYSAPVSARTAVFLIYPIGQGSFSDGMPLGISGTFNFMIVFQAEHNILMHPFHMLGVAGVFGGSLFSAMHGSLVTSSLVRETTEVESQNYGYKFGQEEETYNIVAAHGYFGRLIFQYASFNNSRSLHFFLGAWPVIGIWFTAMGVSTMAFNLNGFNFNQSILDSQGRVIGTWADVLNRANIGFEVMHERNAHNFPLDLASGEQAPVALTAPAING.

Helical transmembrane passes span 29–46 (YVGW…TATT), 118–133 (QFLI…QWEL), and 142–156 (WICV…ARTA). Tyr126 contributes to the pheophytin a binding site. Residues Asp170 and Glu189 each contribute to the [CaMn4O5] cluster site. The helical transmembrane segment at 197–218 (FHMLGVAGVFGGSLFSAMHGSL) threads the bilayer. His198 provides a ligand contact to chlorophyll a. A quinone-binding positions include His215 and 264-265 (SF). His215 contacts Fe cation. His272 contributes to the Fe cation binding site. A helical transmembrane segment spans residues 274–288 (FLGAWPVIGIWFTAM). [CaMn4O5] cluster contacts are provided by His332, Glu333, Asp342, and Ala344. Residues 345-360 (SGEQAPVALTAPAING) constitute a propeptide that is removed on maturation.

This sequence belongs to the reaction center PufL/M/PsbA/D family. As to quaternary structure, PSII is composed of 1 copy each of membrane proteins PsbA, PsbB, PsbC, PsbD, PsbE, PsbF, PsbH, PsbI, PsbJ, PsbK, PsbL, PsbM, PsbT, PsbX, PsbY, PsbZ, Psb30/Ycf12, peripheral proteins PsbO, CyanoQ (PsbQ), PsbU, PsbV and a large number of cofactors. It forms dimeric complexes. It depends on The D1/D2 heterodimer binds P680, chlorophylls that are the primary electron donor of PSII, and subsequent electron acceptors. It shares a non-heme iron and each subunit binds pheophytin, quinone, additional chlorophylls, carotenoids and lipids. D1 provides most of the ligands for the Mn4-Ca-O5 cluster of the oxygen-evolving complex (OEC). There is also a Cl(-1) ion associated with D1 and D2, which is required for oxygen evolution. The PSII complex binds additional chlorophylls, carotenoids and specific lipids. as a cofactor. Post-translationally, tyr-161 forms a radical intermediate that is referred to as redox-active TyrZ, YZ or Y-Z. In terms of processing, C-terminally processed by CtpA; processing is essential to allow assembly of the oxygen-evolving complex and thus photosynthetic growth.

It localises to the cellular thylakoid membrane. It carries out the reaction 2 a plastoquinone + 4 hnu + 2 H2O = 2 a plastoquinol + O2. In terms of biological role, photosystem II (PSII) is a light-driven water:plastoquinone oxidoreductase that uses light energy to abstract electrons from H(2)O, generating O(2) and a proton gradient subsequently used for ATP formation. It consists of a core antenna complex that captures photons, and an electron transfer chain that converts photonic excitation into a charge separation. The D1/D2 (PsbA/PsbD) reaction center heterodimer binds P680, the primary electron donor of PSII as well as several subsequent electron acceptors. This Synechocystis sp. (strain PCC 6714) (Aphanocapsa sp. (strain PCC 6714)) protein is Photosystem II protein D1.